Here is a 548-residue protein sequence, read N- to C-terminus: Flagellin (548 aa).

This sequence belongs to the bacterial flagellin family.

It is found in the secreted. Its subcellular location is the bacterial flagellum. Functionally, flagellin is the subunit protein which polymerizes to form the filaments of bacterial flagella. The polypeptide is Flagellin (fliC) (Escherichia coli O127:H6 (strain E2348/69 / EPEC)).